The sequence spans 456 residues: RuvB-like helicase 1 (456 aa).

70–77 (GPPGTGKT) is an ATP binding site.

The protein belongs to the RuvB family. As to quaternary structure, forms homohexameric rings. May form a dodecamer with rept made of two stacked hexameric rings. Component of the chromatin remodeling Ino80 complex.

The protein localises to the nucleus. The catalysed reaction is ATP + H2O = ADP + phosphate + H(+). Functionally, acts as a transcriptional coactivator in Wg signaling. In terms of biological role, proposed core component of the chromatin remodeling Ino80 complex which is involved in transcriptional regulation, DNA replication and probably DNA repair. The sequence is that of RuvB-like helicase 1 from Aedes aegypti (Yellowfever mosquito).